We begin with the raw amino-acid sequence, 488 residues long: MIQGTTSDAGKSTLVAGLCRLARRAGARVAPFKPQNMALNSAVTADGGEIGRAQALQALAAGVAPHTDFNPVLLKPTSDRGAQVIIHGKARMNLDARAYHDYKPVAFDAVLESYARLRAGYDTVLVEGAGSPAEINLREGDIANMGFAERVDCPVVLVADIDRGGVFAHLVGTLACLSDSERARVRGFVINRFRGDIKLLEPGLDWLRAQTGKPVFGVLPYLHGLLLDAEDMLPSQARSAAARGDAGVLRVVVPALPRISNHTDFDPLRAHPQVEFTYWKSGPVPDADLLILPGSKSVQRDLAWLRDAGWDAVIRRHLRYGGKVIGICGGMQMLGRTLDDPLGLEGAPASVPGLGLLDFDTTLQPDKTLKNVTGHLALPGAAAVHGYEIHMGDTRGPALAAPALTLAAGDASGGVRPDGAVSADGQILATYVHGLFDAPDACAVLLAWAGLDGAERIDYPALREASLERLADSFAEHLDLRALYAEFR.

The 194-residue stretch at 248-441 folds into the GATase cobBQ-type domain; the sequence is VLRVVVPALP…VHGLFDAPDA (194 aa). The active-site Nucleophile is Cys328. The active site involves His433.

It belongs to the CobB/CobQ family. CobQ subfamily.

It functions in the pathway cofactor biosynthesis; adenosylcobalamin biosynthesis. In terms of biological role, catalyzes amidations at positions B, D, E, and G on adenosylcobyrinic A,C-diamide. NH(2) groups are provided by glutamine, and one molecule of ATP is hydrogenolyzed for each amidation. This Burkholderia ambifaria (strain ATCC BAA-244 / DSM 16087 / CCUG 44356 / LMG 19182 / AMMD) (Burkholderia cepacia (strain AMMD)) protein is Cobyric acid synthase.